The primary structure comprises 135 residues: Salivary protein 15 Iper-1 (135 aa).

Positions 1–22 are cleaved as a signal peptide; sequence MESFVAMKVVCILFLFVVAAEA. N-linked (GlcNAc...) asparagine glycosylation is found at Asn93 and Asn104. The interval 116–135 is CD4-binding; it reads GPNKQTCADKSKCVGHIPGC.

It belongs to the salp15 family. As to quaternary structure, interacts with host CD4. Interacts with host DC-SIGN (CD209). (Microbial infection) Interacts with Borrelia outer surface protein C (OspC). Expressed in salivary glands from feeding female ticks. Highly expressed 4 days after start of feeding.

It is found in the secreted. Its function is as follows. Salivary tick protein that downregulates host immune system by binding to both dendritic cells, and CD4(+) T cells. Specifically binds to the CD4 coreceptor on T cells. This interaction prevents the activation of the Src kinase, Lck, and its downstream substrate Zap-70, and results in deficient activation of PLCgamma1, the repression of calcium fluxes triggered by T-cell antigen receptor (TCR) ligation, and a subsequent reduction in interleukin-2 production. This salivary protein also binds to DC-SIGN (CD209) on dendritic cells (DC) and activates the Raf-1 kinase/MEK signaling pathway that results in down-regulating expression of pro-inflammatory cytokines. Furthermore, it inhibits T cell proliferation induced by DCs. It also inhibits in vitro keratinocyte inflammation induced by Borrelia burgdorferi or by the major outer surface protein (OspC) of Borrelia. In addition, it downregulates chemokines and monocyte chemoattractant protein 1, as well as several antimicrobial peptides such as defensins, cathelicidin, psoriasin, and RNase 7. Apart from its immunomodulatory activities, it is also associated with protection of Borrelia spirochetes from antibody-mediated killing through its binding to OspC. In vivo, tests on different immune disease animal models show promising therapeutic results, e.g., in inhibiting HIV infection, experimental autoimmune encephalomyelitis, transplantation rejection, and asthma. Functionally, (Microbial infection) Protects Borrelia garinii from anti-Borrelia antibody-mediated cytotoxicity in vitro. May facilitate B.garinii transmission in mouse model. In terms of biological role, (Microbial infection) Protects Borrelia burgdorferi from anti-Borrelia antibody-mediated cytotoxicity in vitro. (Microbial infection) Protects Borrelia afzelii from anti-Borrelia antibody-mediated cytotoxicity in vitro. This Ixodes persulcatus (Taiga tick) protein is Salivary protein 15 Iper-1.